The following is a 239-amino-acid chain: Putative zinc finger protein 132L (239 aa).

The disordered stretch occupies residues 20–40 (DASLSTKSPKREPSQEKEIKK). Residues 28-40 (PKREPSQEKEIKK) show a composition bias toward basic and acidic residues. 2 C3H1-type zinc fingers span residues 44 to 68 (IKKN…HPGE) and 81 to 106 (RRKT…HDES). A disordered region spans residues 128 to 151 (PGECKFSHPPPPPPSPPSPPPKEE). Residues 135–147 (HPPPPPPSPPSPP) are compositionally biased toward pro residues.

The sequence is that of Putative zinc finger protein 132L from Acheta domesticus (House cricket).